We begin with the raw amino-acid sequence, 607 residues long: Large ribosomal subunit assembly factor BipA (607 aa).

The tr-type G domain maps to 3–198 (ENLRNIAIIA…AIVDHVPAPD (196 aa)). Residues 15-20 (DHGKTT) and 128-131 (NKVD) contribute to the GTP site. The C-terminal domain (CTD), required but not sufficient to bind 70S or 30S ribosomes stretch occupies residues 481–607 (GQRQNGVLIS…RRANRGQKEE (127 aa)).

Belongs to the TRAFAC class translation factor GTPase superfamily. Classic translation factor GTPase family. BipA subfamily. In terms of assembly, monomer.

It is found in the cytoplasm. It catalyses the reaction GTP + H2O = GDP + phosphate + H(+). Its activity is regulated as follows. Ribosome-associated GTPase is not affected by low levels of ppGpp, &gt;40 uM ppGpp and &gt;50 uM GDP inhibit GTPase. The C-terminus (residues 387-607 or 481-607) inhibits GTPase activity, in its absence kcat increases, but GTPase is no longer stimulated by 70S ribosome or 30S or 50S subunits. Functionally, a 50S ribosomal subunit assembly protein with GTPase activity, required for 50S subunit assembly at low temperatures, may also play a role in translation. Binds GTP and analogs. Binds the 70S ribosome between the 30S and 50S subunits, in a similar position as ribosome-bound EF-G; it contacts a number of ribosomal proteins, both rRNAs and the A-site tRNA. A ribosome-stimulated GTPase, GTPase activity increases 4 fold in the presence of 70S ribosomes. Binds 70S ribosomes in the presence of GTP or its non-hydrolyzable analog GMPPNP; in the presence of ppGpp or under stress conditions it binds to 30S ribosomal subunits. This is Large ribosomal subunit assembly factor BipA from Salmonella typhimurium (strain LT2 / SGSC1412 / ATCC 700720).